We begin with the raw amino-acid sequence, 424 residues long: Protein pellino (424 aa).

The segment at 1–21 (MVKRTDGTESPILAEDGGDGH) is disordered. Residue Ser10 is modified to Phosphoserine.

The protein belongs to the pellino family. In terms of assembly, interacts with pll.

In terms of biological role, scaffold protein involved in the Toll signaling pathway via its interaction with pelle/pll kinase. This Drosophila melanogaster (Fruit fly) protein is Protein pellino (Pli).